The following is a 568-amino-acid chain: Probable inactive 1-aminocyclopropane-1-carboxylate synthase-like protein 2 (568 aa).

The segment at 1–21 (MSHRSDTLPVPSGQRRGRVPR) is disordered. Lys-395 is modified (N6-(pyridoxal phosphate)lysine).

This sequence belongs to the class-I pyridoxal-phosphate-dependent aminotransferase family.

This is Probable inactive 1-aminocyclopropane-1-carboxylate synthase-like protein 2 (ACCSL) from Homo sapiens (Human).